We begin with the raw amino-acid sequence, 228 residues long: MRAFSAATVRATTRKSFIPMAPRTPFVTPSFTKNVGSMRRMRFYSDEAKSEESKENNEDLTEEQSEIKKLESQLSAKTKEASELKDRLLRSVADFRNLQQVTKKDIQKAKDFALQKFAKDLLESVDNFGHALNAFKEEDLQKSKEISDLYTGVRMTRDVFENTLRKHGIEKLDPLGEPFDPNKHEATFELPQPDKEPGTVFHVQQLGFTLNDRVIRPAKVGIVKGEEN.

Over residues 46–57 (DEAKSEESKENN) the composition is skewed to basic and acidic residues. A disordered region spans residues 46 to 66 (DEAKSEESKENNEDLTEEQSE).

The protein belongs to the GrpE family. In terms of assembly, component of the PAM complex, at least composed of SSC1 (mtHsp70), MGE1, TIM44, PAM16/TIM16, PAM17 and PAM18/TIM14. Interacts with SSQ1. In terms of processing, the N-terminus is blocked.

It localises to the mitochondrion matrix. Functionally, essential component of the PAM complex, a complex required for the translocation of transit peptide-containing proteins from the inner membrane into the mitochondrial matrix in an ATP-dependent manner. Seems to control the nucleotide-dependent binding of SSC1 to substrate proteins and the association of SSC1 with TIM44. In Saccharomyces cerevisiae (strain ATCC 204508 / S288c) (Baker's yeast), this protein is GrpE protein homolog, mitochondrial (MGE1).